The chain runs to 199 residues: NAD(P)H dehydrogenase (quinone) (199 aa).

A Flavodoxin-like domain is found at 4–190 (MLVLYYSAYG…DGARFQGRRV (187 aa)). FMN is bound by residues 10–15 (SAYGHM) and 78–80 (TRY). NAD(+) is bound at residue Y12. A substrate-binding site is contributed by W98. FMN is bound by residues 113–119 (STATQYG) and H134. The interval 162 to 181 (GMTTTADGDGSRQPSAQELD) is disordered. Residues 163–177 (MTTTADGDGSRQPSA) show a composition bias toward polar residues.

It belongs to the WrbA family. Requires FMN as cofactor.

It carries out the reaction a quinone + NADH + H(+) = a quinol + NAD(+). It catalyses the reaction a quinone + NADPH + H(+) = a quinol + NADP(+). This is NAD(P)H dehydrogenase (quinone) from Brucella suis (strain ATCC 23445 / NCTC 10510).